Here is a 612-residue protein sequence, read N- to C-terminus: Sulfite reductase [NADPH] hemoprotein beta-component (612 aa).

The interval 1-26 is disordered; sequence MDDHKPIETPDGPAVDTPGIGARRYE. 4 residues coordinate [4Fe-4S] cluster: cysteine 469, cysteine 475, cysteine 514, and cysteine 518. Cysteine 518 provides a ligand contact to siroheme.

The protein belongs to the nitrite and sulfite reductase 4Fe-4S domain family. In terms of assembly, alpha(8)-beta(8). The alpha component is a flavoprotein, the beta component is a hemoprotein. Siroheme serves as cofactor. It depends on [4Fe-4S] cluster as a cofactor.

The catalysed reaction is hydrogen sulfide + 3 NADP(+) + 3 H2O = sulfite + 3 NADPH + 4 H(+). The protein operates within sulfur metabolism; hydrogen sulfide biosynthesis; hydrogen sulfide from sulfite (NADPH route): step 1/1. Functionally, component of the sulfite reductase complex that catalyzes the 6-electron reduction of sulfite to sulfide. This is one of several activities required for the biosynthesis of L-cysteine from sulfate. The protein is Sulfite reductase [NADPH] hemoprotein beta-component of Methylorubrum extorquens (strain ATCC 14718 / DSM 1338 / JCM 2805 / NCIMB 9133 / AM1) (Methylobacterium extorquens).